Here is a 357-residue protein sequence, read N- to C-terminus: UDP-N-acetylglucosamine--N-acetylmuramyl-(pentapeptide) pyrophosphoryl-undecaprenol N-acetylglucosamine transferase (357 aa).

UDP-N-acetyl-alpha-D-glucosamine is bound by residues 15–17, Asn124, Arg165, Ser194, and Gln288; that span reads TGG.

It belongs to the glycosyltransferase 28 family. MurG subfamily.

The protein localises to the cell inner membrane. It carries out the reaction di-trans,octa-cis-undecaprenyl diphospho-N-acetyl-alpha-D-muramoyl-L-alanyl-D-glutamyl-meso-2,6-diaminopimeloyl-D-alanyl-D-alanine + UDP-N-acetyl-alpha-D-glucosamine = di-trans,octa-cis-undecaprenyl diphospho-[N-acetyl-alpha-D-glucosaminyl-(1-&gt;4)]-N-acetyl-alpha-D-muramoyl-L-alanyl-D-glutamyl-meso-2,6-diaminopimeloyl-D-alanyl-D-alanine + UDP + H(+). It participates in cell wall biogenesis; peptidoglycan biosynthesis. Functionally, cell wall formation. Catalyzes the transfer of a GlcNAc subunit on undecaprenyl-pyrophosphoryl-MurNAc-pentapeptide (lipid intermediate I) to form undecaprenyl-pyrophosphoryl-MurNAc-(pentapeptide)GlcNAc (lipid intermediate II). The sequence is that of UDP-N-acetylglucosamine--N-acetylmuramyl-(pentapeptide) pyrophosphoryl-undecaprenol N-acetylglucosamine transferase from Nostoc sp. (strain PCC 7120 / SAG 25.82 / UTEX 2576).